Consider the following 81-residue polypeptide: Small ribosomal subunit protein bS18 (81 aa).

Belongs to the bacterial ribosomal protein bS18 family. As to quaternary structure, part of the 30S ribosomal subunit. Forms a tight heterodimer with protein bS6.

Binds as a heterodimer with protein bS6 to the central domain of the 16S rRNA, where it helps stabilize the platform of the 30S subunit. The protein is Small ribosomal subunit protein bS18 of Desulfotalea psychrophila (strain LSv54 / DSM 12343).